We begin with the raw amino-acid sequence, 882 residues long: Serine/threonine-protein kinase greatwall (882 aa).

The residue at position 1 (Met1) is an N-acetylmethionine. Residues 35 to 838 (FTIVKPISRG…MKELKRHHLF (804 aa)) form the Protein kinase domain. ATP-binding positions include 41–49 (ISRGAFGKV) and Lys62. Asp156 serves as the catalytic Proton acceptor. A phosphothreonine mark is found at Thr207 and Thr222. Residues Ser293, Ser371, and Ser454 each carry the phosphoserine modification. At Thr521 the chain carries Phosphothreonine. A phosphoserine mark is found at Ser554, Ser558, Ser633, Ser660, and Ser671. The segment at 713-736 (TPNQVKSGTPYRTPKSVRRGAAPV) is disordered. Residue Thr725 is modified to Phosphothreonine. Ser728 is modified (phosphoserine). Thr744 is subject to Phosphothreonine; by CDK1. The AGC-kinase C-terminal domain occupies 839-882 (SDVDWENLQHQTMPFIPQPDDETDTSYFEARNNAQHLTISGFSL). A phosphoserine mark is found at Ser878 and Ser881.

It belongs to the protein kinase superfamily. AGC Ser/Thr protein kinase family. Phosphorylation at Thr-744 by CDK1 during M phase activates its kinase activity. Maximum phosphorylation occurs in prometaphase.

The protein localises to the cytoplasm. Its subcellular location is the cytoskeleton. It is found in the microtubule organizing center. The protein resides in the centrosome. It localises to the nucleus. It catalyses the reaction L-seryl-[protein] + ATP = O-phospho-L-seryl-[protein] + ADP + H(+). The catalysed reaction is L-threonyl-[protein] + ATP = O-phospho-L-threonyl-[protein] + ADP + H(+). Serine/threonine kinase that plays a key role in M phase by acting as a regulator of mitosis entry and maintenance. Acts by promoting the inactivation of protein phosphatase 2A (PP2A) during M phase: does not directly inhibit PP2A but acts by mediating phosphorylation and subsequent activation of ARPP19 and ENSA at 'Ser-62' and 'Ser-67', respectively. ARPP19 and ENSA are phosphatase inhibitors that specifically inhibit the PPP2R2D (PR55-delta) subunit of PP2A. Inactivation of PP2A during M phase is essential to keep cyclin-B1-CDK1 activity high. Following DNA damage, it is also involved in checkpoint recovery by being inhibited. The protein is Serine/threonine-protein kinase greatwall (MASTL) of Ailuropoda melanoleuca (Giant panda).